The sequence spans 324 residues: Interactor of constitutive active ROPs 4 (324 aa).

Disordered regions lie at residues 1–74 (MPKP…SGLE), 91–156 (LAKA…ASKE), 175–201 (SLSE…KAKE), and 289–324 (FVGS…KGQK). Low complexity predominate over residues 13 to 28 (QRQSPRLRTSLLSTSS). Composition is skewed to basic and acidic residues over residues 29 to 50 (DPHH…DRRS), 95 to 106 (EAAKKRAQEELH), and 118 to 156 (PERD…ASKE). Residues 62–266 (SQKKLGSRIS…ADAAAAVLSG (205 aa)) are a coiled coil. Residues 313 to 324 (MFGDLWKKKGQK) show a composition bias toward basic and acidic residues.

Belongs to the ICR family. As to quaternary structure, interacts with ARAC11 in vitro.

Functionally, acts as a scaffold, mediating interaction of ROPs with different proteins. This chain is Interactor of constitutive active ROPs 4 (ICR4), found in Arabidopsis thaliana (Mouse-ear cress).